The chain runs to 761 residues: MNQSLLVTKRDGRTERINLDKIHRVLDWAAEGLNNVSVSQVELRSHIQFYDGIKTSDIHETIIKAAADLISRDAPDYQYLAARLAIFHLRKKAFGQFEPPALYHHVVKMVELGKYDNHLLEDYTEEEFKQMDSFIVHDRDMTFSYAAVKQLEGKYLVQNRVTGEIYESAQFLYILVAACLFSNYPRETRLDYVKRFYDAVSTFKISLPTPIMSGVRTPTRQFSSCVLIECGDSLDSINATSSAIVKYVSQRAGIGINAGRIRALGSPIRGGEAFHTGCIPFYKHFQTAVKSCSQGGVRGGAATLFYPMWHLEVESLLVLKNNRGVEGNRVRHMDYGVQINKLMYTRLLKGGDITLFSPSDVPGLYDAFFADQDEFERLYVKYEHDDSIRKQRVKAVELFSLMMQERASTGRIYIQNVDHCNTHSPFDPVVAPVRQSNLCLEIALPTKPLNDVNDENGEIALCTLSAFNLGAIKTLDELEELAILAVRALDALLDYQDYPIPAAKRGAMGRRTLGIGVINFAYWLAKNGKRYSDGSANNLTHKTFEAIQYYLLKASNELAKEQGACPWFNETTYAKGILPIDTYKKDLDAIVNEPLHYDWEQLRESIKTHGLRNSTLSALMPSETSSQISNATNGIEPPRGYVSIKASKDGILRQVVPDYEHLKDAYELLWEMPNNDGYLQLVGIMQKFIDQSISANTNYDPSRFPSGKVPMQQLLKDLLTAYKFGVKTLYYQNTRDGAEDAQDDLAPSIQDDGCESGACKI.

The region spanning 5 to 95 (LLVTKRDGRT…IFHLRKKAFG (91 aa)) is the ATP-cone domain. ATP is bound by residues K9, 15-21 (ERINLDK), T55, and K91. T209 provides a ligand contact to GDP. A disulfide bridge connects residues C225 and C462. DTTP contacts are provided by residues 232–234 (DSL), R262, and R269. N437 lines the GDP pocket. The Proton acceptor role is filled by N437. Catalysis depends on C439, which acts as the Cysteine radical intermediate. GDP contacts are provided by residues E441 and 623–625 (ETS). E441 serves as the catalytic Proton acceptor.

This sequence belongs to the ribonucleoside diphosphate reductase large chain family. In terms of assembly, tetramer of two alpha (R1) and two beta (R2) subunits. The B1 protein is a dimer of alpha subunits. A radical transfer pathway occurs between 'Tyr-122' of R2 and R1.

The catalysed reaction is a 2'-deoxyribonucleoside 5'-diphosphate + [thioredoxin]-disulfide + H2O = a ribonucleoside 5'-diphosphate + [thioredoxin]-dithiol. With respect to regulation, under complex allosteric control mediated by deoxynucleoside triphosphates and ATP binding to separate specificity and activation sites on the alpha subunit. The type of nucleotide bound at the specificity site determines substrate preference. It seems probable that ATP makes the enzyme reduce CDP and UDP, dGTP favors ADP reduction and dTTP favors GDP reduction. Stimulated by ATP and inhibited by dATP binding to the activity site. Functionally, provides the precursors necessary for DNA synthesis. Catalyzes the biosynthesis of deoxyribonucleotides from the corresponding ribonucleotides. R1 contains the binding sites for both substrates and allosteric effectors and carries out the actual reduction of the ribonucleotide. In Salmonella typhimurium (strain LT2 / SGSC1412 / ATCC 700720), this protein is Ribonucleoside-diphosphate reductase 1 subunit alpha (nrdA).